The primary structure comprises 304 residues: MSIPDSSVVKAFLLELQNNICNGLEALDGVASFKEDSWKREEGGGGQSRVLTGGKVFEQAGVNFSHVMGASMPASATAHRPELAGRNFEAMGVSLVIHPNNPHIPTTHANVRFFIAHKEGTDPIWWFGGGFDLTPYYPYLEDVVSWHQSAKALCEPFGDETYPKYKKWCDEYFWLPHRNETRGVGGLFFDDLNKQGFDKSFDFMQAVGNGFLTAYAPIVERRKETEYGEHERQFQLYRRGRYVEFNLVYDRGTLFGLQTGGRTESILMSMPPLVRWEYAYIPEAGSPEAALYSDYLKPRDWLSL.

Position 94 (serine 94) interacts with substrate. Positions 98 and 108 each coordinate a divalent metal cation. Catalysis depends on histidine 108, which acts as the Proton donor. Residue 110 to 112 (NVR) participates in substrate binding. Histidine 147 and histidine 177 together coordinate a divalent metal cation. An important for dimerization region spans residues 242 to 277 (YVEFNLVYDRGTLFGLQTGGRTESILMSMPPLVRWE). Position 260 to 262 (260 to 262 (GGR)) interacts with substrate.

Belongs to the aerobic coproporphyrinogen-III oxidase family. Homodimer. A divalent metal cation serves as cofactor.

Its subcellular location is the cytoplasm. It catalyses the reaction coproporphyrinogen III + O2 + 2 H(+) = protoporphyrinogen IX + 2 CO2 + 2 H2O. Its pathway is porphyrin-containing compound metabolism; protoporphyrin-IX biosynthesis; protoporphyrinogen-IX from coproporphyrinogen-III (O2 route): step 1/1. Functionally, involved in the heme biosynthesis. Catalyzes the aerobic oxidative decarboxylation of propionate groups of rings A and B of coproporphyrinogen-III to yield the vinyl groups in protoporphyrinogen-IX. This chain is Oxygen-dependent coproporphyrinogen-III oxidase, found in Shewanella piezotolerans (strain WP3 / JCM 13877).